A 222-amino-acid polypeptide reads, in one-letter code: Small ribosomal subunit protein uS3 (222 aa).

The KH type-2 domain occupies 39–108 (IRKFVKNKLS…NVLINIVEVK (70 aa)).

It belongs to the universal ribosomal protein uS3 family. As to quaternary structure, part of the 30S ribosomal subunit. Forms a tight complex with proteins S10 and S14.

Binds the lower part of the 30S subunit head. Binds mRNA in the 70S ribosome, positioning it for translation. This chain is Small ribosomal subunit protein uS3, found in Clostridium acetobutylicum (strain ATCC 824 / DSM 792 / JCM 1419 / IAM 19013 / LMG 5710 / NBRC 13948 / NRRL B-527 / VKM B-1787 / 2291 / W).